A 328-amino-acid chain; its full sequence is MTSTKQHKKVILVGDGAVGSSYAFALVNQGIAQELGIIEIPQLHEKAVGDALDLSHALAFTSPKKIYAAQYSDCADADLVVITAGAPQKPGETRLDLVGKNLAINKSIVTQVVESGFKGIFLVAANPVDVLTYSTWKFSGFPKERVIGSGTSLDSARFRQALAEKLDVDARSVHAYIMGEHGDSEFAVWSHANIAGVNLEEFLKDTQNVQEAELIELFEGVRDAAYTIINKKGATYYGIAVALARITKAILDDENAVLPLSVFQEGQYGVENVFIGQPAVVGAHGIIRPVNIPLNDAETQKMQASAKELQAIIDEAWKNPEFQEASKN.

Residues Val-18, Glu-39, Lys-46, Tyr-71, and 85-86 (GA) contribute to the NAD(+) site. Positions 88 and 94 each coordinate substrate. NAD(+) is bound by residues Ser-107, 124-126 (AAN), and Ser-149. 126–129 (NPVD) provides a ligand contact to substrate. 154-157 (DSAR) contacts substrate. Arg-159 and His-174 together coordinate beta-D-fructose 1,6-bisphosphate. His-181 (proton acceptor) is an active-site residue. At Tyr-226 the chain carries Phosphotyrosine. Thr-235 provides a ligand contact to substrate.

It belongs to the LDH/MDH superfamily. LDH family. In terms of assembly, homotetramer.

It localises to the cytoplasm. The catalysed reaction is (S)-lactate + NAD(+) = pyruvate + NADH + H(+). Its pathway is fermentation; pyruvate fermentation to lactate; (S)-lactate from pyruvate: step 1/1. With respect to regulation, allosterically activated by fructose 1,6-bisphosphate (FBP). Functionally, catalyzes the conversion of lactate to pyruvate. The sequence is that of L-lactate dehydrogenase from Streptococcus pneumoniae (strain 70585).